The sequence spans 725 residues: Catalase-peroxidase 1 (725 aa).

A cross-link (tryptophyl-tyrosyl-methioninium (Trp-Tyr) (with M-250)) is located at residues 96–224; the sequence is WHSAGSYRLA…LAAVQMGLIY (129 aa). The active-site Proton acceptor is the H97. A cross-link (tryptophyl-tyrosyl-methioninium (Tyr-Met) (with W-96)) is located at residues 224-250; sequence YVNPEGVDGNPDPLRTAKDVRETFKRM. Heme b is bound at residue H265.

This sequence belongs to the peroxidase family. Peroxidase/catalase subfamily. In terms of assembly, homodimer or homotetramer. Requires heme b as cofactor. In terms of processing, formation of the three residue Trp-Tyr-Met cross-link is important for the catalase, but not the peroxidase activity of the enzyme.

The catalysed reaction is H2O2 + AH2 = A + 2 H2O. It catalyses the reaction 2 H2O2 = O2 + 2 H2O. Bifunctional enzyme with both catalase and broad-spectrum peroxidase activity. The sequence is that of Catalase-peroxidase 1 from Idiomarina loihiensis (strain ATCC BAA-735 / DSM 15497 / L2-TR).